Here is a 130-residue protein sequence, read N- to C-terminus: Small ribosomal subunit protein uS9 (130 aa).

The segment at 102–130 (GFLTRDPRKKERKKYGLKKARKSPQFSKR) is disordered. The segment covering 111–130 (KERKKYGLKKARKSPQFSKR) has biased composition (basic residues).

This sequence belongs to the universal ribosomal protein uS9 family.

This is Small ribosomal subunit protein uS9 from Finegoldia magna (strain ATCC 29328 / DSM 20472 / WAL 2508) (Peptostreptococcus magnus).